The following is a 479-amino-acid chain: Kynurenine 3-monooxygenase (479 aa).

Belongs to the aromatic-ring hydroxylase family. KMO subfamily. FAD is required as a cofactor.

It is found in the mitochondrion outer membrane. It carries out the reaction L-kynurenine + NADPH + O2 + H(+) = 3-hydroxy-L-kynurenine + NADP(+) + H2O. It participates in cofactor biosynthesis; NAD(+) biosynthesis; quinolinate from L-kynurenine: step 1/3. Catalyzes the hydroxylation of L-kynurenine (L-Kyn) to form 3-hydroxy-L-kynurenine (L-3OHKyn). Required for synthesis of quinolinic acid. This Chaetomium globosum (strain ATCC 6205 / CBS 148.51 / DSM 1962 / NBRC 6347 / NRRL 1970) (Soil fungus) protein is Kynurenine 3-monooxygenase.